Here is a 37-residue protein sequence, read N- to C-terminus: Photosystem I reaction center subunit VIII (37 aa).

Residues 7–27 (LPAIFVPLVGLVFPAIAMVSL) traverse the membrane as a helical segment.

It belongs to the PsaI family.

The protein resides in the plastid. It is found in the chloroplast thylakoid membrane. Functionally, may help in the organization of the PsaL subunit. The polypeptide is Photosystem I reaction center subunit VIII (Morus indica (Mulberry)).